Here is a 577-residue protein sequence, read N- to C-terminus: 2-hydroxyacyl-CoA lyase (577 aa).

Thiamine diphosphate is bound at residue Glu-59. The thiamine pyrophosphate binding stretch occupies residues 412–493; that stretch reads TMDVGRAVLV…VIVFNNNGVY (82 aa). Residues Asp-462 and Asn-489 each coordinate Mg(2+).

Belongs to the TPP enzyme family. In terms of assembly, homotetramer. It depends on Mg(2+) as a cofactor. Thiamine diphosphate serves as cofactor.

The catalysed reaction is an (R)-2-hydroxy-long-chain-fatty acyl-CoA = a long-chain fatty aldehyde + formyl-CoA. It catalyses the reaction a 2-hydroxy-3-methyl fatty acyl-CoA = a 2-methyl-branched fatty aldehyde + formyl-CoA. Its function is as follows. Catalyzes a carbon-carbon cleavage reaction; cleaves a 2-hydroxy-3-methylacyl-CoA into formyl-CoA and a 2-methyl-branched fatty aldehyde. In Oryza sativa subsp. japonica (Rice), this protein is 2-hydroxyacyl-CoA lyase.